The sequence spans 328 residues: MKAPVRVAVTGAAGQIGYALLFRIASGEMLGKDQPVILQLLELSNEKAQAALKGVMMELEDCAFPLLAGMVGTDDAEVAFKDIDVALLVGARPRGPGMERKDLLLENAKIFTAQGAALNKVAKRDVKVLVVGNPANTNAYIAMESAPDLNPKNFTAMLRLDHNRALSQLSLKLGKPVGGIEKLVVWGNHSPTMYPDYRFATSDGASIGDAINDQEWNAGTFIPTVGKRGAAIIEARGLSSAASAANAAIDHVRDWVLGSNGKWVTMGVPSDGSYGIPEGVIFGFPVTTENGQYTLVKDLPIDDFSQKYIDKTLAELEEERSGVSHLLG.

11-17 (GAAGQIG) provides a ligand contact to NAD(+). Residues R94 and R100 each coordinate substrate. NAD(+) is bound by residues N107, Q114, and 131-133 (VGN). 2 residues coordinate substrate: N133 and R164. H189 acts as the Proton acceptor in catalysis.

The protein belongs to the LDH/MDH superfamily. MDH type 2 family.

The catalysed reaction is (S)-malate + NAD(+) = oxaloacetate + NADH + H(+). Its function is as follows. Catalyzes the reversible oxidation of malate to oxaloacetate. The chain is Malate dehydrogenase from Xanthomonas campestris pv. campestris (strain B100).